A 455-amino-acid polypeptide reads, in one-letter code: Exodeoxyribonuclease 7 large subunit (455 aa).

This sequence belongs to the XseA family. As to quaternary structure, heterooligomer composed of large and small subunits.

It is found in the cytoplasm. It catalyses the reaction Exonucleolytic cleavage in either 5'- to 3'- or 3'- to 5'-direction to yield nucleoside 5'-phosphates.. Bidirectionally degrades single-stranded DNA into large acid-insoluble oligonucleotides, which are then degraded further into small acid-soluble oligonucleotides. This chain is Exodeoxyribonuclease 7 large subunit, found in Escherichia fergusonii (strain ATCC 35469 / DSM 13698 / CCUG 18766 / IAM 14443 / JCM 21226 / LMG 7866 / NBRC 102419 / NCTC 12128 / CDC 0568-73).